The sequence spans 314 residues: tRNA dimethylallyltransferase (314 aa).

15–22 (GPTATGKS) lines the ATP pocket. A substrate-binding site is contributed by 17–22 (TATGKS). Positions 40 to 43 (DSML) are interaction with substrate tRNA.

Belongs to the IPP transferase family. In terms of assembly, monomer. Requires Mg(2+) as cofactor.

It carries out the reaction adenosine(37) in tRNA + dimethylallyl diphosphate = N(6)-dimethylallyladenosine(37) in tRNA + diphosphate. Catalyzes the transfer of a dimethylallyl group onto the adenine at position 37 in tRNAs that read codons beginning with uridine, leading to the formation of N6-(dimethylallyl)adenosine (i(6)A). In Pelotomaculum thermopropionicum (strain DSM 13744 / JCM 10971 / SI), this protein is tRNA dimethylallyltransferase.